The chain runs to 90 residues: Probable two-component-system connector protein YmgA (90 aa).

The span at 63–80 (SDSGGPNRRTATADNKSM) shows a compositional bias: polar residues. A disordered region spans residues 63 to 90 (SDSGGPNRRTATADNKSMFNGKKINRIH).

In terms of biological role, probably a connector protein for RcsB/C regulation of biofilm formation, providing additional signal input into the two-component signaling pathway. May serve to stimulate biofilm maturation, probably via the Rcs phosphorelay. Mild overexpression at 16 degrees Celsius increases the production of colanic acid, an exopolysaccharide and matrix component, and reduces adhesive curli fimbriae expression. Both of these effects require RcsB. This is Probable two-component-system connector protein YmgA (ymgA) from Escherichia coli (strain K12).